The chain runs to 259 residues: Methyltransferase sdnD (259 aa).

This sequence belongs to the FkbM methyltransferase family.

Its pathway is antibiotic biosynthesis. Its function is as follows. Methyltransferase; part of the gene cluster that mediates the biosynthesis of sordarin and hypoxysordarin, glycoside antibiotics with a unique tetracyclic diterpene aglycone structure. First, the geranylgeranyl diphosphate synthase sdnC constructs GGDP from farnesyl diphosphate and isopentenyl diphosphate. The diterpene cyclase sdnA then catalyzes the cyclization of GGDP to afford cycloaraneosene. Cycloaraneosene is then hydroxylated four times by the putative cytochrome P450 monooxygenases sdnB, sdnE, sdnF and sdnH to give a hydroxylated cycloaraneosene derivative such as cycloaraneosene-8,9,13,19-tetraol. Although the order of the hydroxylations is unclear, at least C8, C9 and C13 of the cycloaraneosene skeleton are hydroxylated before the sordaricin formation. Dehydration of the 13-hydroxy group of the hydroxylated cycloaraneosene derivative might be catalyzed by an unassigned hypothetical protein such as sdnG and sdnP to construct the cyclopentadiene moiety. The FAD-dependent oxidoreductase sdnN is proposed to catalyze the oxidation at C9 of the hydroxylated cycloaraneosene derivative and also catalyze the Baeyer-Villiger oxidation to give the lactone intermediate. The presumed lactone intermediate would be hydrolyzed to give an acrolein moiety and a carboxylate moiety. Then, [4+2]cycloaddition would occur between the acrolein moiety and the cyclopentadiene moiety to give sordaricin. SdnN might also be involved in the [4+2]cycloaddition after the hypothesized oxidation to accommodate the oxidized product and prompt the [4+2]cycloaddition. GDP-6-deoxy-D-altrose may be biosynthesized from GDP-D-mannose by the putative GDP-mannose-4,6-dehydratase sdnI and the short-chain dehydrogenase sdnK. The glycosyltransferase sdnJ catalyzes the attachment of 6-deoxy-D-altrose onto the 19-hydroxy group of sordaricin to give 4'-O-demethylsordarin. The methyltransferase sdnD would complete the biosynthesis of sordarin. Sordarin can be further modified into hypoxysordarin. The unique acyl chain at the 3'-hydroxy group of hypoxysordarin would be constructed by an iterative type I PKS sdnO and the trans-acting polyketide methyltransferase sdnL. SdnL would be responsible for the introduction of an alpha-methyl group of the polyketide chain. Alternatively, the beta-lactamase-like protein sdnR might be responsible for the cleavage and transfer of the polyketide chain from the PKS sdnO to sordarin. Two putative cytochrome P450 monooxygenases, sdnQ and sdnT, might catalyze the epoxidations of the polyketide chain to complete the biosynthesis of hypoxysordarin. Transcriptional regulators sdnM and sdnS are presumably encoded for the transcriptional regulation of the expression of the sdn gene cluster. In Sordaria araneosa (Pleurage araneosa), this protein is Methyltransferase sdnD.